The chain runs to 470 residues: Glutamate--tRNA ligase 2 (470 aa).

Positions Pro-11 to Gly-21 match the 'HIGH' region motif. Positions Lys-238–Arg-242 match the 'KMSKS' region motif. Lys-241 contacts ATP.

The protein belongs to the class-I aminoacyl-tRNA synthetase family. Glutamate--tRNA ligase type 1 subfamily. As to quaternary structure, monomer.

It is found in the cytoplasm. It carries out the reaction tRNA(Glu) + L-glutamate + ATP = L-glutamyl-tRNA(Glu) + AMP + diphosphate. Its function is as follows. Catalyzes the attachment of glutamate to tRNA(Glu) in a two-step reaction: glutamate is first activated by ATP to form Glu-AMP and then transferred to the acceptor end of tRNA(Glu). The chain is Glutamate--tRNA ligase 2 from Ehrlichia ruminantium (strain Gardel).